Here is a 70-residue protein sequence, read N- to C-terminus: Fumarase D (70 aa).

This sequence belongs to the FumD family.

The catalysed reaction is (S)-malate = fumarate + H2O. Its function is as follows. In vitro catalyzes the addition of water to fumarate, forming malate. Cannot catalyze the reverse reaction. Cannot use the cis-isomer maleate as substrate. The sequence is that of Fumarase D from Salmonella typhi.